The chain runs to 662 residues: Histidine decarboxylase (662 aa).

Residues Tyr88 and His201 each coordinate substrate. Lys312 carries the post-translational modification N6-(pyridoxal phosphate)lysine. The disordered stretch occupies residues 489–518 (QPSPRAKNVIPPPPGTRGLSLESVSEGGDD).

It belongs to the group II decarboxylase family. Homodimer. The cofactor is pyridoxal 5'-phosphate.

The enzyme catalyses L-histidine + H(+) = histamine + CO2. The protein operates within amine and polyamine biosynthesis; histamine biosynthesis; histamine from L-histidine: step 1/1. In terms of biological role, catalyzes the biosynthesis of histamine from histidine. This chain is Histidine decarboxylase (Hdc), found in Mus musculus (Mouse).